The sequence spans 259 residues: Insulin-induced gene 1 protein (259 aa).

Over 1-66 (MPRLHDHVWS…ARPGSWHHDL (66 aa)) the chain is Cytoplasmic. Residues 33–57 (PQGPGAPEPEPAPRGQREGTAGFSA) are disordered. The chain crosses the membrane as a helical span at residues 67–89 (VQRSLVLFSFGVVLALVLNLLQI). Residues 90–108 (QRNVTLFPDEVIATIFSSA) lie on the Extracellular side of the membrane. A helical transmembrane segment spans residues 109–126 (WWVPPCCGTAAAVVGLLY). At 127–141 (PCIDSHLGEPHKFKR) the chain is on the cytoplasmic side. Glycyl lysine isopeptide (Lys-Gly) (interchain with G-Cter in ubiquitin) cross-links involve residues K138 and K140. Residues 142 to 164 (EWASVMRCIAVFVGINHASAKLD) form a helical membrane-spanning segment. Residues 165-167 (FAN) lie on the Extracellular side of the membrane. The chain crosses the membrane as a helical span at residues 168–186 (NVQLSLTLAALSLGLWWTF). Residues 187–191 (DRSRS) lie on the Cytoplasmic side of the membrane. S189 carries the post-translational modification Phosphoserine. A helical membrane pass occupies residues 192–213 (GLGLGITIAFLATLITQFLVYN). Residues 214–227 (GVYQYTSPDFLYIR) lie on the Extracellular side of the membrane. The chain crosses the membrane as a helical span at residues 228-245 (SWLPCIFFSGGVTVGNIG). Topologically, residues 246–259 (RQLAMGVPEKPHSD) are cytoplasmic. The KxHxx motif lies at 253-259 (PEKPHSD).

Belongs to the INSIG family. Interacts with SCAP; interaction is direct and only takes place in the presence of sterols; it prevents interaction between SCAP and the coat protein complex II (COPII). Associates with the SCAP-SREBP complex (composed of SCAP and SREBF1/SREBP1 or SREBF2/SREBP2); association is mediated via its interaction with SCAP and only takes place in the presence of sterols. Interaction with SCAP is mutually exclusive with PAQR3. Interacts with HMGCR (via its SSD); the interaction, accelerated by sterols, leads to the recruitment of HMGCR to AMFR/gp78 for its ubiquitination by the sterol-mediated ERAD pathway. Interacts with AMFR/gp78 (via its membrane domain); the interaction recruits HMCR at the ER membrane for its ubiquitination and degradation by the sterol-mediated ERAD pathway. Interacts with SOAT2/ACAT2; leading to promote recruitment of AMFR/gp78 and subsequent ubiquitination of SOAT2/ACAT2. Interacts with RNF139. Interacts with RNF145. Post-translationally, phosphorylation at Ser-189 by PCK1 reduces binding to oxysterol, disrupting the interaction between INSIG1 and SCAP, thereby promoting nuclear translocation of SREBP proteins (SREBF1/SREBP1 or SREBF2/SREBP2) and subsequent transcription of downstream lipogenesis-related genes. In terms of processing, ubiquitinated by AMFR/gp78 in response to sterol deprivation, leading to its degradation: when the SCAP-SREBP complex becomes dissociated from INSIG1, INSIG1 is then ubiquitinated and degraded in proteasomes. Although ubiquitination is required for rapid INSIG1 degradation, it is not required for release of the SCAP-SREBP complex. Ubiquitinated by RNF139. Highly expressed in liver and kidney.

It localises to the endoplasmic reticulum membrane. Functionally, oxysterol-binding protein that mediates feedback control of cholesterol synthesis by controlling both endoplasmic reticulum to Golgi transport of SCAP and degradation of HMGCR. Acts as a negative regulator of cholesterol biosynthesis by mediating the retention of the SCAP-SREBP complex in the endoplasmic reticulum, thereby blocking the processing of sterol regulatory element-binding proteins (SREBPs) SREBF1/SREBP1 and SREBF2/SREBP2. Binds oxysterol, including 25-hydroxycholesterol, regulating interaction with SCAP and retention of the SCAP-SREBP complex in the endoplasmic reticulum. In presence of oxysterol, interacts with SCAP, retaining the SCAP-SREBP complex in the endoplasmic reticulum, thereby preventing SCAP from escorting SREBF1/SREBP1 and SREBF2/SREBP2 to the Golgi. Sterol deprivation or phosphorylation by PCK1 reduce oxysterol-binding, disrupting the interaction between INSIG1 and SCAP, thereby promoting Golgi transport of the SCAP-SREBP complex, followed by processing and nuclear translocation of SREBF1/SREBP1 and SREBF2/SREBP2. Also regulates cholesterol synthesis by regulating degradation of HMGCR: initiates the sterol-mediated ubiquitin-mediated endoplasmic reticulum-associated degradation (ERAD) of HMGCR via recruitment of the reductase to the ubiquitin ligases AMFR/gp78 and/or RNF139. Also regulates degradation of SOAT2/ACAT2 when the lipid levels are low: initiates the ubiquitin-mediated degradation of SOAT2/ACAT2 via recruitment of the ubiquitin ligases AMFR/gp78. This Rattus norvegicus (Rat) protein is Insulin-induced gene 1 protein.